Reading from the N-terminus, the 395-residue chain is Flap endonuclease 1 (395 aa).

Residues 1–104 (MGIKHLYQLI…GELAKRFQRK (104 aa)) form an N-domain region. Aspartate 34 contributes to the Mg(2+) binding site. DNA is bound by residues arginine 47 and arginine 70. 5 residues coordinate Mg(2+): aspartate 86, glutamate 158, glutamate 160, aspartate 179, and aspartate 181. The interval 122 to 253 (DVEKFSRRTV…STALKLIREH (132 aa)) is I-domain. Glutamate 158 contributes to the DNA binding site. Positions 231 and 233 each coordinate DNA. Aspartate 233 lines the Mg(2+) pocket. Positions 341-349 (QQSRLEGFF) are interaction with PCNA. The interval 359–395 (KATLKRKADEKLEEKKKKQKVDAKAKKQAKAKPRTAG) is disordered. A compositionally biased stretch (basic and acidic residues) spans 364–383 (RKADEKLEEKKKKQKVDAKA). Over residues 384–395 (KKQAKAKPRTAG) the composition is skewed to basic residues.

It belongs to the XPG/RAD2 endonuclease family. FEN1 subfamily. Interacts with PCNA. Three molecules of fen1 bind to one PCNA trimer with each molecule binding to one PCNA monomer. PCNA stimulates the nuclease activity without altering cleavage specificity. The cofactor is Mg(2+). Phosphorylated. Phosphorylation upon DNA damage induces relocalization to the nuclear plasma.

It localises to the nucleus. Its subcellular location is the nucleolus. The protein resides in the nucleoplasm. The protein localises to the mitochondrion. In terms of biological role, structure-specific nuclease with 5'-flap endonuclease and 5'-3' exonuclease activities involved in DNA replication and repair. During DNA replication, cleaves the 5'-overhanging flap structure that is generated by displacement synthesis when DNA polymerase encounters the 5'-end of a downstream Okazaki fragment. It enters the flap from the 5'-end and then tracks to cleave the flap base, leaving a nick for ligation. Also involved in the long patch base excision repair (LP-BER) pathway, by cleaving within the apurinic/apyrimidinic (AP) site-terminated flap. Acts as a genome stabilization factor that prevents flaps from equilibrating into structures that lead to duplications and deletions. Also possesses 5'-3' exonuclease activity on nicked or gapped double-stranded DNA, and exhibits RNase H activity. Also involved in replication and repair of rDNA and in repairing mitochondrial DNA. This chain is Flap endonuclease 1 (fen1), found in Pyrenophora tritici-repentis (strain Pt-1C-BFP) (Wheat tan spot fungus).